The chain runs to 127 residues: Probable soluble cytochrome b562 1 (127 aa).

The first 21 residues, 1-21, serve as a signal peptide directing secretion; it reads MRKIPIIAGVFSLLITSCTFA. Positions 28 and 123 each coordinate heme b.

The protein belongs to the cytochrome b562 family. Heme b is required as a cofactor.

Its subcellular location is the periplasm. Electron-transport protein of unknown function. The chain is Probable soluble cytochrome b562 1 (cybC1) from Yersinia pestis.